A 420-amino-acid polypeptide reads, in one-letter code: E3 ubiquitin-protein ligase pellino homolog 2 (420 aa).

The region spanning 15 to 202 (EPVKYGELVV…MHPRGGFTEE (188 aa)) is the FHA; atypical domain.

This sequence belongs to the pellino family. In terms of assembly, interacts with TRAF6, IRAK1, IRAK4 and MAP3K7. Interacts with BCL10; this interaction is impaired by SOCS3. Phosphorylated by IRAK1 and IRAK4 enhancing its E3 ligase activity.

The enzyme catalyses S-ubiquitinyl-[E2 ubiquitin-conjugating enzyme]-L-cysteine + [acceptor protein]-L-lysine = [E2 ubiquitin-conjugating enzyme]-L-cysteine + N(6)-ubiquitinyl-[acceptor protein]-L-lysine.. Its pathway is protein modification; protein ubiquitination. In terms of biological role, E3 ubiquitin ligase catalyzing the covalent attachment of ubiquitin moieties onto substrate proteins. Involved in the TLR and IL-1 signaling pathways via interaction with the complex containing IRAK kinases and TRAF6. Mediates IL1B-induced IRAK1 'Lys-63'-linked polyubiquitination and possibly 'Lys-48'-linked ubiquitination. May be important for LPS- and IL1B-induced MAP3K7-dependent, but not MAP3K3-dependent, NF-kappa-B activation. Can activate the MAP (mitogen activated protein) kinase pathway leading to activation of ELK1. This Homo sapiens (Human) protein is E3 ubiquitin-protein ligase pellino homolog 2 (PELI2).